Reading from the N-terminus, the 657-residue chain is Glycogen debranching enzyme (657 aa).

The active-site Nucleophile is the Asp-336. Catalysis depends on Glu-371, which acts as the Proton donor. The disordered stretch occupies residues Ala-460–Lys-479.

This sequence belongs to the glycosyl hydrolase 13 family.

It catalyses the reaction Hydrolysis of (1-&gt;6)-alpha-D-glucosidic linkages to branches with degrees of polymerization of three or four glucose residues in limit dextrin.. It functions in the pathway glycan degradation; glycogen degradation. Functionally, removes maltotriose and maltotetraose chains that are attached by 1,6-alpha-linkage to the limit dextrin main chain, generating a debranched limit dextrin. The sequence is that of Glycogen debranching enzyme from Escherichia coli O6:K15:H31 (strain 536 / UPEC).